The primary structure comprises 186 residues: T-cell receptor-associated transmembrane adapter 1 (186 aa).

The Extracellular portion of the chain corresponds to M1–C7. Residues P8–F28 form a helical; Signal-anchor for type III membrane protein membrane-spanning segment. The Cytoplasmic segment spans residues N29 to N186. Phosphoserine is present on S46. Position 79 is a phosphotyrosine (Y79). Residues Y79–M82 are interaction with PIK3R1. The interval S116–L140 is disordered. A compositionally biased stretch (basic residues) spans K118–N128. Over residues F131–L140 the composition is skewed to basic and acidic residues.

In terms of assembly, homodimer; disulfide-linked. Interacts with CD3Z. When phosphorylated, interacts with PIK3R1. Post-translationally, phosphorylated on tyrosines by LCK or FYN upon TCR activation. In terms of tissue distribution, strongly expressed in thymus, and to a lesser extent in spleen, lymph node and peripheral blood lymphocytes. Present in T-cells and NK cells, but not B-cells (at protein level).

The protein localises to the cell membrane. Functionally, stabilizes the TCR (T-cell antigen receptor)/CD3 complex at the surface of T-cells. The sequence is that of T-cell receptor-associated transmembrane adapter 1 (TRAT1) from Homo sapiens (Human).